The chain runs to 90 residues: Small ribosomal subunit protein bS16 (90 aa).

The protein belongs to the bacterial ribosomal protein bS16 family. As to quaternary structure, part of the 30S ribosomal subunit.

The protein is Small ribosomal subunit protein bS16 of Bacillus subtilis (strain 168).